We begin with the raw amino-acid sequence, 116 residues long: Phosphoribosyl-AMP cyclohydrolase (116 aa).

A Mg(2+)-binding site is contributed by Asp-82. Residue Cys-83 participates in Zn(2+) binding. The Mg(2+) site is built by Asp-84 and Asp-86. 2 residues coordinate Zn(2+): Cys-99 and Cys-106.

The protein belongs to the PRA-CH family. Homodimer. The cofactor is Mg(2+). Requires Zn(2+) as cofactor.

It is found in the cytoplasm. It catalyses the reaction 1-(5-phospho-beta-D-ribosyl)-5'-AMP + H2O = 1-(5-phospho-beta-D-ribosyl)-5-[(5-phospho-beta-D-ribosylamino)methylideneamino]imidazole-4-carboxamide. The protein operates within amino-acid biosynthesis; L-histidine biosynthesis; L-histidine from 5-phospho-alpha-D-ribose 1-diphosphate: step 3/9. Catalyzes the hydrolysis of the adenine ring of phosphoribosyl-AMP. This Saccharopolyspora erythraea (strain ATCC 11635 / DSM 40517 / JCM 4748 / NBRC 13426 / NCIMB 8594 / NRRL 2338) protein is Phosphoribosyl-AMP cyclohydrolase.